Consider the following 201-residue polypeptide: Retinol-binding protein 4 (201 aa).

An N-terminal signal peptide occupies residues 1-18; the sequence is MKWVWALLLLAALGSGRA. 3 cysteine pairs are disulfide-bonded: C22–C178, C88–C192, and C138–C147. A substrate-binding site is contributed by Q116. R139 is modified (omega-N-methylarginine).

It belongs to the calycin superfamily. Lipocalin family. In terms of assembly, interacts with TTR. Interaction with TTR prevents its loss by filtration through the kidney glomeruli. Interacts with STRA6. As to expression, detected in blood plasma and in urine (at protein level).

It is found in the secreted. Functionally, retinol-binding protein that mediates retinol transport in blood plasma. Delivers retinol from the liver stores to the peripheral tissues. Transfers the bound all-trans retinol to STRA6, that then facilitates retinol transport across the cell membrane. The chain is Retinol-binding protein 4 (RBP4) from Homo sapiens (Human).